Reading from the N-terminus, the 164-residue chain is 6,7-dimethyl-8-ribityllumazine synthase (164 aa).

5-amino-6-(D-ribitylamino)uracil contacts are provided by residues Phe24, 62–64 (SFE), and 86–88 (AVI). Residue 91-92 (QT) participates in (2S)-2-hydroxy-3-oxobutyl phosphate binding. Catalysis depends on His94, which acts as the Proton donor. Phe119 contacts 5-amino-6-(D-ribitylamino)uracil. (2S)-2-hydroxy-3-oxobutyl phosphate is bound at residue Arg133.

The protein belongs to the DMRL synthase family.

It catalyses the reaction (2S)-2-hydroxy-3-oxobutyl phosphate + 5-amino-6-(D-ribitylamino)uracil = 6,7-dimethyl-8-(1-D-ribityl)lumazine + phosphate + 2 H2O + H(+). The protein operates within cofactor biosynthesis; riboflavin biosynthesis; riboflavin from 2-hydroxy-3-oxobutyl phosphate and 5-amino-6-(D-ribitylamino)uracil: step 1/2. Its function is as follows. Catalyzes the formation of 6,7-dimethyl-8-ribityllumazine by condensation of 5-amino-6-(D-ribitylamino)uracil with 3,4-dihydroxy-2-butanone 4-phosphate. This is the penultimate step in the biosynthesis of riboflavin. The sequence is that of 6,7-dimethyl-8-ribityllumazine synthase from Synechocystis sp. (strain ATCC 27184 / PCC 6803 / Kazusa).